A 321-amino-acid chain; its full sequence is Tetraacyldisaccharide 4'-kinase (321 aa).

ATP is bound at residue 54–61; the sequence is SVGGTGKT.

The protein belongs to the LpxK family.

The enzyme catalyses a lipid A disaccharide + ATP = a lipid IVA + ADP + H(+). The protein operates within glycolipid biosynthesis; lipid IV(A) biosynthesis; lipid IV(A) from (3R)-3-hydroxytetradecanoyl-[acyl-carrier-protein] and UDP-N-acetyl-alpha-D-glucosamine: step 6/6. Its function is as follows. Transfers the gamma-phosphate of ATP to the 4'-position of a tetraacyldisaccharide 1-phosphate intermediate (termed DS-1-P) to form tetraacyldisaccharide 1,4'-bis-phosphate (lipid IVA). This is Tetraacyldisaccharide 4'-kinase from Rickettsia bellii (strain OSU 85-389).